The primary structure comprises 123 residues: Non-specific lipid-transfer protein 3 (123 aa).

The signal sequence occupies residues M1 to P25. Intrachain disulfides connect C33–C80, C43–C57, C58–C105, and C78–C119.

This sequence belongs to the plant LTP family.

Plant non-specific lipid-transfer proteins transfer phospholipids as well as galactolipids across membranes. May play a role in wax or cutin deposition in the cell walls of expanding epidermal cells and certain secretory tissues. In Prunus dulcis (Almond), this protein is Non-specific lipid-transfer protein 3.